The sequence spans 475 residues: 1,3-beta-glucanosyltransferase gel2 (475 aa).

The N-terminal stretch at 1 to 21 (MLPTYVRLFTAVCALATTASA) is a signal peptide. C69 and C98 are joined by a disulfide. Residues Y87, N159, E160, and D201 each contribute to the (1,3-beta-D-glucosyl)n site. E160 acts as the Proton donor in catalysis. 2 disulfides stabilise this stretch: C215-C350 and C234-C265. N236 is a glycosylation site (N-linked (GlcNAc...) asparagine). E262 (nucleophile) is an active-site residue. A (1,3-beta-D-glucosyl)n-binding site is contributed by Y294. Residues N311, N339, and N357 are each glycosylated (N-linked (GlcNAc...) asparagine). The segment at 420-451 (GESNTPGAHSSGSTSGSSSSGGSSSSSSDKES) is disordered. The span at 429–446 (SSGSTSGSSSSGGSSSSS) shows a compositional bias: low complexity. A lipid anchor (GPI-like-anchor amidated serine) is attached at S451. Residues 452-475 (AAGTISVPFVGLLSAASFMAFFML) constitute a propeptide, removed in mature form.

Belongs to the glycosyl hydrolase 72 family. In terms of processing, the GPI-like anchor contains a phosphoceramide lipid group.

The protein localises to the cell membrane. Its function is as follows. Splits internally a 1,3-beta-glucan molecule and transfers the newly generated reducing end (the donor) to the non-reducing end of another 1,3-beta-glucan molecule (the acceptor) forming a 1,3-beta linkage, resulting in the elongation of 1,3-beta-glucan chains in the cell wall. Involved in cell wall morphogenesis. The protein is 1,3-beta-glucanosyltransferase gel2 (gel2) of Aspergillus fumigatus (strain CBS 144.89 / FGSC A1163 / CEA10) (Neosartorya fumigata).